Consider the following 379-residue polypeptide: Dual-specificity RNA methyltransferase RlmN (379 aa).

The active-site Proton acceptor is the E95. The Radical SAM core domain occupies 101–345; it reads EETRGTLCVS…TTVRKTRGDD (245 aa). C108 and C350 are oxidised to a cystine. C115, C119, and C122 together coordinate [4Fe-4S] cluster. S-adenosyl-L-methionine is bound by residues 176-177, S208, 230-232, and N307; these read GE and SLH. The active-site S-methylcysteine intermediate is the C350.

It belongs to the radical SAM superfamily. RlmN family. It depends on [4Fe-4S] cluster as a cofactor.

The protein resides in the cytoplasm. It carries out the reaction adenosine(2503) in 23S rRNA + 2 reduced [2Fe-2S]-[ferredoxin] + 2 S-adenosyl-L-methionine = 2-methyladenosine(2503) in 23S rRNA + 5'-deoxyadenosine + L-methionine + 2 oxidized [2Fe-2S]-[ferredoxin] + S-adenosyl-L-homocysteine. The catalysed reaction is adenosine(37) in tRNA + 2 reduced [2Fe-2S]-[ferredoxin] + 2 S-adenosyl-L-methionine = 2-methyladenosine(37) in tRNA + 5'-deoxyadenosine + L-methionine + 2 oxidized [2Fe-2S]-[ferredoxin] + S-adenosyl-L-homocysteine. Functionally, specifically methylates position 2 of adenine 2503 in 23S rRNA and position 2 of adenine 37 in tRNAs. m2A2503 modification seems to play a crucial role in the proofreading step occurring at the peptidyl transferase center and thus would serve to optimize ribosomal fidelity. This Burkholderia ambifaria (strain MC40-6) protein is Dual-specificity RNA methyltransferase RlmN.